Reading from the N-terminus, the 637-residue chain is Threonine--tRNA ligase (637 aa).

The TGS domain occupies 1-61 (MITITLPDSS…ATDAAVRLIT (61 aa)). The segment at 238 to 528 (DHRKLGAELD…LIEHFAGKFP (291 aa)) is catalytic. Zn(2+)-binding residues include Cys-329, His-380, and His-505.

This sequence belongs to the class-II aminoacyl-tRNA synthetase family. In terms of assembly, homodimer. It depends on Zn(2+) as a cofactor.

It is found in the cytoplasm. It catalyses the reaction tRNA(Thr) + L-threonine + ATP = L-threonyl-tRNA(Thr) + AMP + diphosphate + H(+). Its function is as follows. Catalyzes the attachment of threonine to tRNA(Thr) in a two-step reaction: L-threonine is first activated by ATP to form Thr-AMP and then transferred to the acceptor end of tRNA(Thr). Also edits incorrectly charged L-seryl-tRNA(Thr). The polypeptide is Threonine--tRNA ligase (Desulfosudis oleivorans (strain DSM 6200 / JCM 39069 / Hxd3) (Desulfococcus oleovorans)).